The primary structure comprises 143 residues: MSGDRDDKRYPYPKDDAELRRRLTPMQYEVTQHAATERPFTGEYTDTEDAGIYHCVVCGTALFESGAKYHSGCGWPSYFKPIDAEVIDEKMDYTHGMTRVEVRCNQCGAHLGHVFEDGPRDKTGLRYCINSAALNFEAKPEWK.

A MsrB domain is found at 16–139 (DAELRRRLTP…NSAALNFEAK (124 aa)). Residues Cys55, Cys58, Cys104, and Cys107 each contribute to the Zn(2+) site. The Nucleophile role is filled by Cys128.

This sequence belongs to the MsrB Met sulfoxide reductase family. Zn(2+) serves as cofactor.

It carries out the reaction L-methionyl-[protein] + [thioredoxin]-disulfide + H2O = L-methionyl-(R)-S-oxide-[protein] + [thioredoxin]-dithiol. This chain is Peptide methionine sulfoxide reductase MsrB, found in Burkholderia thailandensis (strain ATCC 700388 / DSM 13276 / CCUG 48851 / CIP 106301 / E264).